Consider the following 585-residue polypeptide: Stage II sporulation protein E (585 aa).

2 helical membrane-spanning segments follow: residues 40–57 (LGARLGLVVGSLLIGLYA) and 70–86 (SLTAVVLFLLTPSFVLK). A PPM-type phosphatase domain is found at 355–565 (DTGVAHAAKG…DDMTVVVAKL (211 aa)).

The protein localises to the cell membrane. The enzyme catalyses O-phospho-L-seryl-[protein] + H2O = L-seryl-[protein] + phosphate. It catalyses the reaction O-phospho-L-threonyl-[protein] + H2O = L-threonyl-[protein] + phosphate. Normally needed for pro-sigma E processing during sporulation but can be bypassed in vegetative cells. Activates SpoIIAA by dephosphorylation. In Priestia megaterium (Bacillus megaterium), this protein is Stage II sporulation protein E (spoIIE).